A 388-amino-acid chain; its full sequence is Succinate--CoA ligase [ADP-forming] subunit beta (388 aa).

Positions 9–244 constitute an ATP-grasp domain; it reads KQLFADYGLP…PSQEDPREAH (236 aa). ATP-binding positions include Lys-46, 53 to 55, Glu-99, Thr-102, and Glu-107; that span reads GRG. Asn-199 and Asp-213 together coordinate Mg(2+). Residues Asn-264 and 321 to 323 contribute to the substrate site; that span reads GIV.

The protein belongs to the succinate/malate CoA ligase beta subunit family. As to quaternary structure, heterotetramer of two alpha and two beta subunits. It depends on Mg(2+) as a cofactor.

It carries out the reaction succinate + ATP + CoA = succinyl-CoA + ADP + phosphate. The enzyme catalyses GTP + succinate + CoA = succinyl-CoA + GDP + phosphate. It functions in the pathway carbohydrate metabolism; tricarboxylic acid cycle; succinate from succinyl-CoA (ligase route): step 1/1. Functionally, succinyl-CoA synthetase functions in the citric acid cycle (TCA), coupling the hydrolysis of succinyl-CoA to the synthesis of either ATP or GTP and thus represents the only step of substrate-level phosphorylation in the TCA. The beta subunit provides nucleotide specificity of the enzyme and binds the substrate succinate, while the binding sites for coenzyme A and phosphate are found in the alpha subunit. The chain is Succinate--CoA ligase [ADP-forming] subunit beta from Hahella chejuensis (strain KCTC 2396).